The following is an 861-amino-acid chain: Interleukin-12 receptor subunit beta-2 (861 aa).

Residues methionine 1–alanine 23 form the signal peptide. Over lysine 24–asparagine 622 the chain is Extracellular. Residues asparagine 48, asparagine 129, asparagine 166, and asparagine 271 are each glycosylated (N-linked (GlcNAc...) asparagine). Fibronectin type-III domains are found at residues glutamine 126–proline 224, proline 226–proline 317, glutamate 318–aspartate 415, alanine 423–alanine 520, and proline 521–lysine 620. A WSXWS motif motif is present at residues tryptophan 305–serine 309. N-linked (GlcNAc...) asparagine glycosylation is found at asparagine 347, asparagine 376, and asparagine 480. Residues tryptophan 623 to methionine 643 traverse the membrane as a helical segment. The Cytoplasmic segment spans residues arginine 644 to leucine 861. Residues cysteine 662–alanine 670 carry the Box 1 motif motif. Residues phenylalanine 718–glycine 761 form a disordered region. Tyrosine 800 carries the post-translational modification Phosphotyrosine.

It belongs to the type I cytokine receptor family. Type 2 subfamily. Heterodimer/heterooligomer; disulfide-linked. The functional high affinity IL12 receptor is composed of I12RB1 and IL12RB2. Il12RB2 binds JAK2 (via its N-terminal) through a membrane-proximal region of the cytoplasmic domain. On IL12 stimulation, phosphorylated on C-terminal tyrosine residues.

The protein localises to the membrane. Receptor for interleukin-12. This subunit is the signaling component coupling to the JAK2/STAT4 pathway. This Sus scrofa (Pig) protein is Interleukin-12 receptor subunit beta-2 (IL12RB2).